A 315-amino-acid chain; its full sequence is Homoserine kinase (315 aa).

97–107 is an ATP binding site; it reads PPARGLGSSAT.

The protein belongs to the GHMP kinase family. Homoserine kinase subfamily.

It is found in the cytoplasm. The enzyme catalyses L-homoserine + ATP = O-phospho-L-homoserine + ADP + H(+). It participates in amino-acid biosynthesis; L-threonine biosynthesis; L-threonine from L-aspartate: step 4/5. Its function is as follows. Catalyzes the ATP-dependent phosphorylation of L-homoserine to L-homoserine phosphate. The sequence is that of Homoserine kinase from Prochlorococcus marinus (strain NATL2A).